Consider the following 508-residue polypeptide: Endoglucanase 6 (508 aa).

Positions 1–33 (MLAASLRVEAVAVVAAAVLVLLLSPAAVVVVAG) are cleaved as a signal peptide. The active-site Nucleophile is the aspartate 89. Catalysis depends on residues histidine 419, aspartate 471, and glutamate 480.

It belongs to the glycosyl hydrolase 9 (cellulase E) family.

The protein localises to the secreted. It catalyses the reaction Endohydrolysis of (1-&gt;4)-beta-D-glucosidic linkages in cellulose, lichenin and cereal beta-D-glucans.. The sequence is that of Endoglucanase 6 from Oryza sativa subsp. japonica (Rice).